Consider the following 684-residue polypeptide: Chaperone protein HtpG (684 aa).

The tract at residues 1–329 is a; substrate-binding; sequence MSKKGTIGVT…SPDIPLNVSR (329 aa). A b region spans residues 330–548; it reads SYLQSDANVK…FMRRMRDMAQ (219 aa). A c region spans residues 549–684; that stretch reads LQPGMSFYGE…EFIRRSQRLL (136 aa).

This sequence belongs to the heat shock protein 90 family. Homodimer.

It is found in the cytoplasm. Molecular chaperone. Has ATPase activity. This is Chaperone protein HtpG from Porphyromonas gingivalis (strain ATCC 33277 / DSM 20709 / CIP 103683 / JCM 12257 / NCTC 11834 / 2561).